The sequence spans 113 residues: Nucleoid-associated protein RHA1_ro04210 (113 aa).

Belongs to the YbaB/EbfC family. In terms of assembly, homodimer.

Its subcellular location is the cytoplasm. The protein localises to the nucleoid. Functionally, binds to DNA and alters its conformation. May be involved in regulation of gene expression, nucleoid organization and DNA protection. This chain is Nucleoid-associated protein RHA1_ro04210, found in Rhodococcus jostii (strain RHA1).